A 333-amino-acid polypeptide reads, in one-letter code: Protein amalgam (333 aa).

An N-terminal signal peptide occupies residues 1-23; the sequence is MARLRLLIGLIFCLAISLDSVLS. Residues 25-128 enclose the Ig-like V-type domain; it reads PVISQISKDV…VLVSATEKVT (104 aa). Residues Asn-45 and Asn-86 are each glycosylated (N-linked (GlcNAc...) asparagine). 3 disulfide bridges follow: Cys-46–Cys-117, Cys-161–Cys-208, and Cys-251–Cys-307. Ig-like C2-type domains are found at residues 139 to 223 and 230 to 323; these read PVIA…RLIR and PQIA…LHLF. An N-linked (GlcNAc...) asparagine glycan is attached at Asn-308.

Its subcellular location is the cell membrane. The sequence is that of Protein amalgam (Ama) from Drosophila melanogaster (Fruit fly).